The following is a 146-amino-acid chain: Large ribosomal subunit protein uL15 (146 aa).

A compositionally biased stretch (basic and acidic residues) spans 1 to 13; it reads MKLHELQPAEGSR. Residues 1–58 form a disordered region; that stretch reads MKLHELQPAEGSRKVRNRVGRGIGSGNGKTAGKGHKGQKARSGGGVRPGFEGGQNPLY. Composition is skewed to gly residues over residues 21 to 31 and 42 to 52; these read RGIGSGNGKTA and SGGGVRPGFEG.

Belongs to the universal ribosomal protein uL15 family. As to quaternary structure, part of the 50S ribosomal subunit.

In terms of biological role, binds to the 23S rRNA. The protein is Large ribosomal subunit protein uL15 of Shouchella clausii (strain KSM-K16) (Alkalihalobacillus clausii).